Reading from the N-terminus, the 82-residue chain is Small ribosomal subunit protein bS16 (82 aa).

Belongs to the bacterial ribosomal protein bS16 family.

This chain is Small ribosomal subunit protein bS16, found in Vibrio cholerae serotype O1 (strain ATCC 39541 / Classical Ogawa 395 / O395).